Consider the following 968-residue polypeptide: RNA polymerase-associated protein RapA (968 aa).

The 171-residue stretch at 164 to 334 (DVGRRHAPRV…FARLRLLDPN (171 aa)) folds into the Helicase ATP-binding domain. 177–184 (DEVGLGKT) lines the ATP pocket. Residues 280–283 (DEAH) carry the DEAH box motif. In terms of domain architecture, Helicase C-terminal spans 490 to 685 (RVEWLMGYLT…ALKAQLEQGR (196 aa)).

It belongs to the SNF2/RAD54 helicase family. RapA subfamily. In terms of assembly, interacts with the RNAP. Has a higher affinity for the core RNAP than for the holoenzyme. Its ATPase activity is stimulated by binding to RNAP.

In terms of biological role, transcription regulator that activates transcription by stimulating RNA polymerase (RNAP) recycling in case of stress conditions such as supercoiled DNA or high salt concentrations. Probably acts by releasing the RNAP, when it is trapped or immobilized on tightly supercoiled DNA. Does not activate transcription on linear DNA. Probably not involved in DNA repair. In Salmonella schwarzengrund (strain CVM19633), this protein is RNA polymerase-associated protein RapA.